Here is a 147-residue protein sequence, read N- to C-terminus: MKKFYSCLPVFLLIGCAQVPLPSSVSKPVQQPGAQQEQLANANSIDECQSLPYVPSDLAKNKSLSNQNADNSASKNSAISSSIFCEKYKQTKEQALTFFQEHPQYMRSKEDEEQLMTEFKKVLLEPGSKNLSIYQTLLSAHERLQAL.

Residues Met-1–Gly-15 form the signal peptide. Cys-16 carries the N-palmitoyl cysteine lipid modification. Residue Cys-16 is the site of S-diacylglycerol cysteine attachment.

The protein belongs to the InvH family.

It is found in the cell outer membrane. Involved in the synthesis of the type III secretion system (T3SS), also called injectisome, which is used to inject bacterial effector proteins into eukaryotic host cells. Pilot protein that is required for the proper localization of the secretin InvG/SctC in the outer membrane. Necessary for efficient adherence and entry of these organisms into cultured epithelial cells. The polypeptide is SPI-1 type 3 secretion system pilotin (Salmonella choleraesuis (strain SC-B67)).